Here is a 197-residue protein sequence, read N- to C-terminus: Molybdenum cofactor guanylyltransferase (197 aa).

Residues 10–12 (LAG), Lys-23, Asn-51, Asp-69, and Asp-99 each bind GTP. Asp-99 provides a ligand contact to Mg(2+).

Belongs to the MobA family. In terms of assembly, monomer. Mg(2+) serves as cofactor.

It localises to the cytoplasm. The catalysed reaction is Mo-molybdopterin + GTP + H(+) = Mo-molybdopterin guanine dinucleotide + diphosphate. In terms of biological role, transfers a GMP moiety from GTP to Mo-molybdopterin (Mo-MPT) cofactor (Moco or molybdenum cofactor) to form Mo-molybdopterin guanine dinucleotide (Mo-MGD) cofactor. This is Molybdenum cofactor guanylyltransferase from Shewanella sp. (strain MR-4).